The following is a 347-amino-acid chain: Ubiquitin thioesterase Otu1 (347 aa).

One can recognise a Ubiquitin-like domain in the interval F5 to A87. The segment at K8 to A89 is UBX-like. One can recognise an OTU domain in the interval L150 to E274. Residues V155–C161 are cys-loop. Residue D158 is part of the active site. The active-site Nucleophile is the C161. Residues I213–I223 form a variable-loop region. The interval F263–H267 is his-loop. Substrate is bound at residue I266. H267 is an active-site residue. An S2 site region spans residues L290–Q295. Residues L317–H341 form a C2H2-type zinc finger. H341 is a catalytic residue.

It catalyses the reaction Thiol-dependent hydrolysis of ester, thioester, amide, peptide and isopeptide bonds formed by the C-terminal Gly of ubiquitin (a 76-residue protein attached to proteins as an intracellular targeting signal).. In terms of biological role, hydrolase that can remove conjugated ubiquitin from proteins and may therefore play an important regulatory role at the level of protein turnover by preventing degradation. Involved in the regulation of DNA damage repair. This is Ubiquitin thioesterase Otu1 from Drosophila melanogaster (Fruit fly).